A 162-amino-acid chain; its full sequence is Caveolin-2 (162 aa).

The Cytoplasmic segment spans residues 1 to 86 (MGLETEKADV…FEISKYVMYK (86 aa)). Tyr-19 is modified (phosphotyrosine; by SRC). 2 positions are modified to phosphoserine: Ser-20 and Ser-23. Tyr-27 carries the post-translational modification Phosphotyrosine; by SRC. The residue at position 36 (Ser-36) is a Phosphoserine. An intramembrane region (helical) is located at residues 87–107 (FLTVFLAIPLAFIAGILFATL). Over 108–162 (SCLHIWILMPFVKTCLMVLPSVQTIWKSVTDVFIAPLCTSVGRSFSSVSLQLSQD) the chain is Cytoplasmic.

It belongs to the caveolin family. Monomer or homodimer. Interacts with CAV1; the interaction forms a stable heterooligomeric complex that is required for targeting to lipid rafts and for caveolae formation. Tyrosine phosphorylated forms do not form heterooligomers with the Tyr-19-phosphorylated form existing as a monomer or dimer, and the Tyr-27-form as a monomer only. Interacts (tyrosine phosphorylated form) with the SH2 domain-containing proteins, RASA1, NCK1 and SRC. Interacts (tyrosine phosphorylated form) with INSR, the interaction (Tyr-27-phosphorylated form) is increased on insulin stimulation. Interacts (Tyr-19 phosphorylated form) with MAPK1 (phosphorylated form); the interaction, promoted by insulin, leads to nuclear location and MAPK1 activation. Interacts with STAT3; the interaction is increased on insulin-induced tyrosine phosphorylation leading to STAT activation. Post-translationally, phosphorylated on serine and tyrosine residues. CAV1 promotes phosphorylation on Ser-23 which then targets the complex to the plasma membrane, lipid rafts and caveolae. Phosphorylation on Ser-36 appears to modulate mitosis in endothelial cells. Phosphorylation on both Tyr-19 and Tyr-27 is required for insulin-induced 'Ser-727' phosphorylation of STAT3 and its activation. Phosphorylation on Tyr-19 is required for insulin-induced phosphorylation of MAPK1 and DNA binding of STAT3. Tyrosine phosphorylation is induced by both EGF and insulin (By. similarity).

The protein resides in the nucleus. It localises to the cytoplasm. The protein localises to the golgi apparatus membrane. It is found in the cell membrane. Its subcellular location is the membrane. The protein resides in the caveola. May act as a scaffolding protein within caveolar membranes. Interacts directly with G-protein alpha subunits and can functionally regulate their activity. Acts as an accessory protein in conjunction with CAV1 in targeting to lipid rafts and driving caveolae formation. The Ser-36 phosphorylated form has a role in modulating mitosis in endothelial cells. Positive regulator of cellular mitogenesis of the MAPK signaling pathway. Required for the insulin-stimulated nuclear translocation and activation of MAPK1 and STAT3, and the subsequent regulation of cell cycle progression. The protein is Caveolin-2 (CAV2) of Chlorocebus aethiops (Green monkey).